The chain runs to 139 residues: Ribulose bisphosphate carboxylase small subunit (139 aa).

Belongs to the RuBisCO small chain family. Heterohexadecamer of 8 large and 8 small subunits.

It is found in the plastid. The protein localises to the chloroplast. Its function is as follows. RuBisCO catalyzes two reactions: the carboxylation of D-ribulose 1,5-bisphosphate, the primary event in carbon dioxide fixation, as well as the oxidative fragmentation of the pentose substrate in the photorespiration process. Both reactions occur simultaneously and in competition at the same active site. Although the small subunit is not catalytic it is essential for maximal activity. This Cylindrotheca sp. (strain N1) (Marine diatom) protein is Ribulose bisphosphate carboxylase small subunit.